The sequence spans 210 residues: Imidazole glycerol phosphate synthase subunit HisH (210 aa).

In terms of domain architecture, Glutamine amidotransferase type-1 spans 3–208 (PIAIIDYGMG…GELVRHAGNA (206 aa)). Residue Cys81 is the Nucleophile of the active site. Residues His183 and Glu185 contribute to the active site.

As to quaternary structure, heterodimer of HisH and HisF.

Its subcellular location is the cytoplasm. The enzyme catalyses 5-[(5-phospho-1-deoxy-D-ribulos-1-ylimino)methylamino]-1-(5-phospho-beta-D-ribosyl)imidazole-4-carboxamide + L-glutamine = D-erythro-1-(imidazol-4-yl)glycerol 3-phosphate + 5-amino-1-(5-phospho-beta-D-ribosyl)imidazole-4-carboxamide + L-glutamate + H(+). The catalysed reaction is L-glutamine + H2O = L-glutamate + NH4(+). It functions in the pathway amino-acid biosynthesis; L-histidine biosynthesis; L-histidine from 5-phospho-alpha-D-ribose 1-diphosphate: step 5/9. Functionally, IGPS catalyzes the conversion of PRFAR and glutamine to IGP, AICAR and glutamate. The HisH subunit catalyzes the hydrolysis of glutamine to glutamate and ammonia as part of the synthesis of IGP and AICAR. The resulting ammonia molecule is channeled to the active site of HisF. This is Imidazole glycerol phosphate synthase subunit HisH from Moorella thermoacetica (strain ATCC 39073 / JCM 9320).